A 477-amino-acid polypeptide reads, in one-letter code: Succinate-semialdehyde dehydrogenase [NADP(+)] (477 aa).

NADP(+)-binding positions include 142-143, 166-169, and 218-219; these read WN, KHSE, and GS. E240 functions as the Proton acceptor in the catalytic mechanism. L241 is an NADP(+) binding site. C274 functions as the Nucleophile in the catalytic mechanism. E371 serves as a coordination point for NADP(+).

It belongs to the aldehyde dehydrogenase family.

It carries out the reaction succinate semialdehyde + NADP(+) + H2O = succinate + NADPH + 2 H(+). The protein operates within amino-acid degradation; 4-aminobutanoate degradation. Catalyzes the NADP(+) dependent oxidation of succinate semialdehyde to succinate. This chain is Succinate-semialdehyde dehydrogenase [NADP(+)] (ssdA), found in Deinococcus radiodurans (strain ATCC 13939 / DSM 20539 / JCM 16871 / CCUG 27074 / LMG 4051 / NBRC 15346 / NCIMB 9279 / VKM B-1422 / R1).